The primary structure comprises 172 residues: L-amino acid N-acyltransferase MnaT (172 aa).

The 163-residue stretch at 1 to 163 (MSIRFARKAD…DLTFMQLQLD (163 aa)) folds into the N-acetyltransferase domain. Acetyl-CoA-binding positions include 85-87 (VYV), 93-98 (GKGLGR), N124, and S133.

Belongs to the acetyltransferase family. PAT/BAR subfamily.

The enzyme catalyses L-methionine + acetyl-CoA = N-acetyl-L-methionine + CoA + H(+). It catalyses the reaction propanoyl-CoA + L-methionine = N-propanoyl-L-methioninate + CoA + H(+). It carries out the reaction L-alpha-phenylglycine + acetyl-CoA = N-acetyl-L-alpha-phenylglycine + CoA + H(+). The catalysed reaction is L-methionine sulfoximine + acetyl-CoA = N-acetyl-L-methionine sulfoximine + CoA + H(+). The enzyme catalyses L-methionine sulfone + acetyl-CoA = N-acetyl-L-methionine sulfone + CoA + H(+). Functionally, acyltransferase that appears to be required for E.coli optimal growth rate and yield via the formation of N-acetylated amino acids. Catalyzes the acylation of L-methionine using acetyl-CoA or propanoyl-CoA as acyl donors, and the acetylation of L-phenylglycine. Is also able to N-acylate other free L-amino acids and their derivatives using a CoA thioester as cosubstrate. Using acetyl-CoA as an acyl donor, substrate specificity is methionine sulfone &gt; methionine sulfoximine &gt; methionine sulfoxide &gt; methionine. Asparagine, lysine, glutamine, aspartate and glutamate are very poor substrates. Using methionine as a substrate, acyl donor preference is propanoyl-CoA &gt; acetyl-CoA &gt;&gt; butyryl-CoA. Likely plays a role in the resistance against the toxic effects of L-methionine sulfoximine (MSX), via its ability to catalyze its acetylation; MSX is a rare amino acid which inhibits glutamine synthetase (GlnA). The chain is L-amino acid N-acyltransferase MnaT from Escherichia coli (strain K12).